The following is a 52-amino-acid chain: Large ribosomal subunit protein eL39 (52 aa).

Belongs to the eukaryotic ribosomal protein eL39 family.

This is Large ribosomal subunit protein eL39 from Desulfurococcus amylolyticus (strain DSM 18924 / JCM 16383 / VKM B-2413 / 1221n) (Desulfurococcus kamchatkensis).